The primary structure comprises 174 residues: 3-hydroxyanthranilate 3,4-dioxygenase (174 aa).

Arginine 47 contacts O2. Positions 51, 57, and 95 each coordinate Fe cation. Residue glutamate 57 participates in substrate binding. Residues arginine 99 and glutamate 110 each contribute to the substrate site. Cysteine 125, cysteine 128, cysteine 162, and cysteine 165 together coordinate Fe cation.

The protein belongs to the 3-HAO family. In terms of assembly, homodimer. Requires Fe(2+) as cofactor.

The enzyme catalyses 3-hydroxyanthranilate + O2 = (2Z,4Z)-2-amino-3-carboxymuconate 6-semialdehyde. It participates in cofactor biosynthesis; NAD(+) biosynthesis; quinolinate from L-kynurenine: step 3/3. Its function is as follows. Catalyzes the oxidative ring opening of 3-hydroxyanthranilate to 2-amino-3-carboxymuconate semialdehyde, which spontaneously cyclizes to quinolinate. The chain is 3-hydroxyanthranilate 3,4-dioxygenase from Burkholderia lata (strain ATCC 17760 / DSM 23089 / LMG 22485 / NCIMB 9086 / R18194 / 383).